Reading from the N-terminus, the 184-residue chain is MAHLVWMLGENGEEKSFENPNELLPLSRLEEIGVLYWHLDPKKSESEEELTKIRRERGYSYFDLTEICPDKLENYEEKLKSFYCEHIHADEEIRYCLEGSGYFDVRDKDDKWIRIWIKEGDMIILPAGIYHRFIVDSNNYIKLMRLFIGEPVWTAYNRPQEDHPVRQEYVKNVKGDTGFALAAH.

Fe(2+)-binding residues include His-86, His-88, Glu-92, and His-131. Residues His-86, His-88, Glu-92, and His-131 each coordinate Ni(2+).

It belongs to the acireductone dioxygenase (ARD) family. The cofactor is Fe(2+). Ni(2+) is required as a cofactor.

The protein resides in the cytoplasm. Its subcellular location is the nucleus. The catalysed reaction is 1,2-dihydroxy-5-(methylsulfanyl)pent-1-en-3-one + O2 = 4-methylsulfanyl-2-oxobutanoate + formate + 2 H(+). The enzyme catalyses 1,2-dihydroxy-5-(methylsulfanyl)pent-1-en-3-one + O2 = 3-(methylsulfanyl)propanoate + CO + formate + 2 H(+). It participates in amino-acid biosynthesis; L-methionine biosynthesis via salvage pathway; L-methionine from S-methyl-5-thio-alpha-D-ribose 1-phosphate: step 5/6. Its function is as follows. Catalyzes 2 different reactions between oxygen and the acireductone 1,2-dihydroxy-3-keto-5-methylthiopentene (DHK-MTPene) depending upon the metal bound in the active site. Fe-containing acireductone dioxygenase (Fe-ARD) produces formate and 2-keto-4-methylthiobutyrate (KMTB), the alpha-ketoacid precursor of methionine in the methionine recycle pathway. Ni-containing acireductone dioxygenase (Ni-ARD) produces methylthiopropionate, carbon monoxide and formate, and does not lie on the methionine recycle pathway. This Oryza sativa subsp. japonica (Rice) protein is Acireductone dioxygenase 4 (ARD4).